The sequence spans 599 residues: Calcium-dependent protein kinase 10 (599 aa).

Glycine 2 is lipidated: N-myristoyl glycine. The tract at residues 27–110 (RQDGDDALPG…PRPRVPPVKR (84 aa)) is disordered. The span at 74–84 (VSTTDTASAEQ) shows a compositional bias: polar residues. Residues 87 to 98 (SKSSAGSDSGEA) are compositionally biased toward low complexity. The 259-residue stretch at 133 to 391 (YSLGRKLGQG…AHEVLRHPWV (259 aa)) folds into the Protein kinase domain. ATP is bound by residues 139–147 (LGQGQFGTT) and lysine 162. Residue aspartate 257 is the Proton acceptor of the active site. Residues 397 to 427 (APDKPLDSAVLSRMKQFSAMNKLKKMALRVI) form an autoinhibitory domain region. EF-hand domains lie at 434–469 (DEIA…VGAN), 470–505 (LQES…MNKI), 506–541 (ERED…FGLG), and 544–575 (QLEE…PTMG). Ca(2+)-binding residues include aspartate 447, aspartate 449, serine 451, glutamine 453, glutamate 458, aspartate 483, aspartate 485, serine 487, threonine 489, glutamate 494, aspartate 519, aspartate 521, serine 523, tyrosine 525, glutamate 530, aspartate 553, aspartate 555, aspartate 557, arginine 559, and glutamate 564.

It belongs to the protein kinase superfamily. Ser/Thr protein kinase family. CDPK subfamily. As to expression, expressed in roots.

The protein resides in the membrane. The catalysed reaction is L-seryl-[protein] + ATP = O-phospho-L-seryl-[protein] + ADP + H(+). The enzyme catalyses L-threonyl-[protein] + ATP = O-phospho-L-threonyl-[protein] + ADP + H(+). With respect to regulation, activated by calcium. Autophosphorylation may play an important role in the regulation of the kinase activity. Its function is as follows. May play a role in signal transduction pathways that involve calcium as a second messenger. The protein is Calcium-dependent protein kinase 10 of Oryza sativa subsp. japonica (Rice).